Here is a 305-residue protein sequence, read N- to C-terminus: Acetyl-coenzyme A carboxylase carboxyl transferase subunit beta (305 aa).

The CoA carboxyltransferase N-terminal domain occupies 29–298; sequence LWTKCESCDA…EMKLPLLESS (270 aa). 4 residues coordinate Zn(2+): Cys33, Cys36, Cys52, and Cys55. Residues 33-55 form a C4-type zinc finger; sequence CESCDALTYTKDLQANLMVCLQC.

Belongs to the AccD/PCCB family. Acetyl-CoA carboxylase is a heterohexamer composed of biotin carboxyl carrier protein (AccB), biotin carboxylase (AccC) and two subunits each of ACCase subunit alpha (AccA) and ACCase subunit beta (AccD). Zn(2+) is required as a cofactor.

Its subcellular location is the cytoplasm. The enzyme catalyses N(6)-carboxybiotinyl-L-lysyl-[protein] + acetyl-CoA = N(6)-biotinyl-L-lysyl-[protein] + malonyl-CoA. It functions in the pathway lipid metabolism; malonyl-CoA biosynthesis; malonyl-CoA from acetyl-CoA: step 1/1. Its function is as follows. Component of the acetyl coenzyme A carboxylase (ACC) complex. Biotin carboxylase (BC) catalyzes the carboxylation of biotin on its carrier protein (BCCP) and then the CO(2) group is transferred by the transcarboxylase to acetyl-CoA to form malonyl-CoA. In Synechococcus sp. (strain ATCC 27144 / PCC 6301 / SAUG 1402/1) (Anacystis nidulans), this protein is Acetyl-coenzyme A carboxylase carboxyl transferase subunit beta.